We begin with the raw amino-acid sequence, 636 residues long: Probable Xaa-Pro aminopeptidase P (636 aa).

Mn(2+)-binding residues include Asp-414, Asp-425, Glu-523, and Glu-537.

This sequence belongs to the peptidase M24B family. It depends on Mn(2+) as a cofactor.

It carries out the reaction Release of any N-terminal amino acid, including proline, that is linked to proline, even from a dipeptide or tripeptide.. In terms of biological role, catalyzes the removal of a penultimate prolyl residue from the N-termini of peptides. In Ajellomyces capsulatus (strain H143) (Darling's disease fungus), this protein is Probable Xaa-Pro aminopeptidase P (AMPP).